The primary structure comprises 297 residues: UDP-N-acetylenolpyruvoylglucosamine reductase (297 aa).

The FAD-binding PCMH-type domain maps to 26–191 (QTGGPAEYLA…IAATFALKAG (166 aa)). Arginine 170 is a catalytic residue. Residue serine 220 is the Proton donor of the active site. The active site involves glutamate 290.

It belongs to the MurB family. FAD is required as a cofactor.

It localises to the cytoplasm. It catalyses the reaction UDP-N-acetyl-alpha-D-muramate + NADP(+) = UDP-N-acetyl-3-O-(1-carboxyvinyl)-alpha-D-glucosamine + NADPH + H(+). It participates in cell wall biogenesis; peptidoglycan biosynthesis. In terms of biological role, cell wall formation. The chain is UDP-N-acetylenolpyruvoylglucosamine reductase from Lactobacillus delbrueckii subsp. bulgaricus (strain ATCC 11842 / DSM 20081 / BCRC 10696 / JCM 1002 / NBRC 13953 / NCIMB 11778 / NCTC 12712 / WDCM 00102 / Lb 14).